The chain runs to 914 residues: High affinity cAMP-specific and IBMX-insensitive 3',5'-cyclic phosphodiesterase 8 (914 aa).

2 disordered regions span residues 1–27 and 113–138; these read MGCS…PLDA and RRAT…HRKS. Positions 116 to 129 are enriched in low complexity; it reads TGSTGTSGTSSSGG. The 48-residue stretch at 312-359 folds into the PAS domain; sequence TQQALYTALHRLKEVVLITDDLLRIQYANRATERLLNMRLDEIISKQL. Residues 558 to 893 form the PDEase domain; the sequence is TAAIVPAKMK…SQWKKYDEQG (336 aa). His-640 serves as the catalytic Proton donor. A divalent metal cation contacts are provided by His-644, His-682, Asp-683, and Asp-799.

This sequence belongs to the cyclic nucleotide phosphodiesterase family. PDE8 subfamily. The cofactor is a divalent metal cation. Expressed in Malpighian tubules and head.

The catalysed reaction is 3',5'-cyclic AMP + H2O = AMP + H(+). It functions in the pathway purine metabolism; 3',5'-cyclic AMP degradation; AMP from 3',5'-cyclic AMP: step 1/1. Functionally, hydrolyzes the second messenger cAMP, which is a key regulator of many important physiological processes. Involved in the positive regulation of MAP kinase signaling and in inhibiting oxidative stress-induced cell death. The protein is High affinity cAMP-specific and IBMX-insensitive 3',5'-cyclic phosphodiesterase 8 of Drosophila melanogaster (Fruit fly).